Reading from the N-terminus, the 805-residue chain is ATP-dependent RNA helicase mak-5 (805 aa).

A compositionally biased stretch (basic residues) spans 1 to 10 (MAVDKKRKNT). Disordered stretches follow at residues 1-33 (MAVDKKRKNTKAPASGPKRRKTQPSSKQIKRPV) and 79-189 (VPKS…ELET). Positions 85-100 (EVEDDGEEFGGFDDEE) are enriched in acidic residues. 3 stretches are compositionally biased toward basic and acidic residues: residues 110 to 119 (QEVKTSETKA), 126 to 143 (AKEKKASKDQRKPKEQQK), and 164 to 189 (KNAEDKKKARKNEKTTVEPKDPELET). The Q motif motif lies at 209–237 (SEWVPLDLSPRMISSIAKLRFSKPTVIQS). Residues 240-463 (IPEIMAGHDV…AGKSKFKATS (224 aa)) form the Helicase ATP-binding domain. 253-260 (ASTGSGKT) provides a ligand contact to ATP. A DEAD box motif is present at residues 372-375 (DEAD). Positions 390–406 (FKALDRPPVEENNEDQK) are enriched in basic and acidic residues. Positions 390 to 435 (FKALDRPPVEENNEDQKMGGTDEEGQEEEEEDSEEEEEEEEEHVNK) are disordered. A compositionally biased stretch (acidic residues) spans 410–431 (TDEEGQEEEEEDSEEEEEEEEE). Residues 510–666 (YLYATLMLQP…NSGNNTKKLV (157 aa)) form the Helicase C-terminal domain. The disordered stretch occupies residues 729 to 751 (AGKWGGKGSSKKQKQKEAQQMSK).

The protein belongs to the DEAD box helicase family. DDX24/MAK5 subfamily.

It localises to the nucleus. Its subcellular location is the nucleolus. It carries out the reaction ATP + H2O = ADP + phosphate + H(+). ATP-binding RNA helicase involved in the biogenesis of 60S ribosomal subunits and is required for the normal formation of 25S and 5.8S rRNAs. The polypeptide is ATP-dependent RNA helicase mak-5 (mak-5) (Neurospora crassa (strain ATCC 24698 / 74-OR23-1A / CBS 708.71 / DSM 1257 / FGSC 987)).